The chain runs to 310 residues: tRNA dimethylallyltransferase (310 aa).

14 to 21 is an ATP binding site; sequence GPTASGKT. 16–21 serves as a coordination point for substrate; the sequence is TASGKT. 3 interaction with substrate tRNA regions span residues 39 to 42, 163 to 167, and 244 to 249; these read DSAL, QRLSR, and RCVGYR.

It belongs to the IPP transferase family. Monomer. The cofactor is Mg(2+).

It carries out the reaction adenosine(37) in tRNA + dimethylallyl diphosphate = N(6)-dimethylallyladenosine(37) in tRNA + diphosphate. Catalyzes the transfer of a dimethylallyl group onto the adenine at position 37 in tRNAs that read codons beginning with uridine, leading to the formation of N6-(dimethylallyl)adenosine (i(6)A). The polypeptide is tRNA dimethylallyltransferase (Aeromonas salmonicida (strain A449)).